Consider the following 128-residue polypeptide: Natriuretic peptides A (128 aa).

A disordered region spans residues Gln-36–Ala-84. The propeptide occupies Glu-68–Asp-78. Position 104 is a phosphoserine (Ser-104). Cys-105 and Cys-121 are disulfide-bonded. The tract at residues Asn-122–Tyr-126 is important for degradation of atrial natriuretic peptide by IDE.

Belongs to the natriuretic peptide family. As to quaternary structure, homodimer; disulfide-linked antiparallel dimer. The precursor molecule is proteolytically cleaved by CORIN at Arg-98 to produce atrial natriuretic peptide. Undergoes further proteolytic cleavage by unknown proteases to give rise to long-acting natriuretic peptide, vessel dilator and kaliuretic peptide. Additional processing gives rise to the auriculin and atriopeptin peptides. In the kidneys, alternative processing by an unknown protease results in the peptide urodilatin. Post-translationally, cleavage by MME initiates degradation of the factor and thereby regulates its activity. Degraded by IDE (in vitro). During IDE degradation, the resulting products can temporarily stimulate NPR2 to produce cGMP, before the fragments are completely degraded and inactivated by IDE (in vitro). In terms of processing, degraded by IDE. Phosphorylation on Ser-104 decreases vasorelaxant activity.

The protein localises to the secreted. The protein resides in the perikaryon. Its subcellular location is the cell projection. Functionally, hormone that plays a key role in mediating cardio-renal homeostasis, and is involved in vascular remodeling and regulating energy metabolism. Acts by specifically binding and stimulating NPR1 to produce cGMP, which in turn activates effector proteins, such as PRKG1, that drive various biological responses. Regulates vasodilation, natriuresis, diuresis and aldosterone synthesis and is therefore essential for regulating blood pressure, controlling the extracellular fluid volume and maintaining the fluid-electrolyte balance. Also involved in inhibiting cardiac remodeling and cardiac hypertrophy by inducing cardiomyocyte apoptosis and attenuating the growth of cardiomyocytes and fibroblasts. Plays a role in female pregnancy by promoting trophoblast invasion and spiral artery remodeling in uterus, and thus prevents pregnancy-induced hypertension. In adipose tissue, acts in various cGMP- and PKG-dependent pathways to regulate lipid metabolism and energy homeostasis. This includes up-regulating lipid metabolism and mitochondrial oxygen utilization by activating the AMP-activated protein kinase (AMPK), and increasing energy expenditure by acting via MAPK11 to promote the UCP1-dependent thermogenesis of brown adipose tissue. Binds the clearance receptor NPR3 which removes the hormone from circulation. May have a role in cardio-renal homeostasis through regulation of natriuresis, diuresis, vasodilation, and inhibiting aldosterone synthesis. In vitro, promotes the production of cGMP and induces vasodilation. May promote natriuresis, at least in part, by enhancing prostaglandin E2 synthesis resulting in the inhibition of renal Na+-K+-ATPase. However reports on the involvement of this peptide in mammal blood volume and blood pressure homeostasis are conflicting; according to a report, in vivo it is not sufficient to activate cGMP and does not inhibit collecting duct transport nor effect diuresis and natriuresis. Appears to bind to specific receptors that are distinct from the receptors bound by atrial natriuretic peptide and vessel dilator. Possibly enhances protein excretion in urine by decreasing proximal tubular protein reabsorption. In terms of biological role, may have a role in cardio-renal homeostasis through regulation of natriuresis, diuresis, and vasodilation. In vitro, promotes the production of cGMP and induces vasodilation. May promote natriuresis, at least in part, by enhancing prostaglandin E2 synthesis resulting in the inhibition of renal Na+-K+-ATPase. However reports on the involvement of this peptide in mammal blood volume and blood pressure homeostasis are conflicting; according to a report it is not sufficient to activate cGMP and does not inhibit collecting duct transport nor effect diuresis and natriuresis. Appears to bind to specific receptors that are distinct from the receptors bound by the atrial natriuretic and long-acting natriuretic peptides. Possibly functions in protein excretion in urine by maintaining the integrity of the proximal tubules and enhancing protein excretion by decreasing proximal tubular protein reabsorption. Its function is as follows. May have a role in cardio-renal homeostasis through regulation of diuresis and inhibiting aldosterone synthesis. In vitro, promotes the production of cGMP and induces vasodilation. May promote natriuresis, at least in part, by enhancing prostaglandin E2 synthesis resulting in the inhibition of renal Na+-K+-ATPase. May have a role in potassium excretion but not sodium excretion (natriuresis). Possibly enhances protein excretion in urine by decreasing proximal tubular protein reabsorption. Functionally, hormone produced in the kidneys that appears to be important for maintaining cardio-renal homeostasis. Mediates vasodilation, natriuresis and diuresis primarily in the renal system, in order to maintain the extracellular fluid volume and control the fluid-electrolyte balance. Specifically binds and stimulates cGMP production by renal transmembrane receptors, likely NPR1. Urodilatin not ANP, may be the natriuretic peptide responsible for the regulation of sodium and water homeostasis in the kidney. May have a role in cardio-renal homeostasis through regulation of natriuresis and vasodilation. In vivo promotes natriuresis and in vitro, vasodilates renal artery strips. In terms of biological role, may have a role in cardio-renal homeostasis through regulation of regulation of natriuresis and vasodilation. In vivo promotes natriuresis. In vitro, vasodilates intestinal smooth muscle but not smooth muscle strips. Its function is as follows. May have a role in cardio-renal homeostasis through regulation of natriuresis and vasodilation. In vivo promotes natriuresis. In vitro, selectively vasodilates intestinal and vascular smooth muscle strips. Functionally, may have a role in cardio-renal homeostasis through regulation of natriuresis and vasodilation. In vivo promotes natriuresis. In vitro, selectively vasodilates intestinal smooth muscle but not vascular smooth muscle strips. This is Natriuretic peptides A (NPPA) from Cavia porcellus (Guinea pig).